The following is a 113-amino-acid chain: MARGGFPNMGGANMNNLMKQAQKLQQDMEKMQGEMEKKEFSATVGGGAVTAVANGKKQIVDIKIEPEVVDEDDIEMLEDLIMSACNEALKKAEEDTSSEVKRLTGGMNLPGMF.

Residues 93-102 (EEDTSSEVKR) are compositionally biased toward basic and acidic residues. Positions 93–113 (EEDTSSEVKRLTGGMNLPGMF) are disordered.

The protein belongs to the YbaB/EbfC family. In terms of assembly, homodimer.

The protein resides in the cytoplasm. It is found in the nucleoid. In terms of biological role, binds to DNA and alters its conformation. May be involved in regulation of gene expression, nucleoid organization and DNA protection. The protein is Nucleoid-associated protein CLJ_B0037 of Clostridium botulinum (strain 657 / Type Ba4).